The primary structure comprises 236 residues: MTKRYWNINLEEMMKAGVHFGHGTKKWNPKMAPYISAKRKGIHITNLTRTARFLLEACDLVFDAASRGKQFLIVGTKNKAANLVAWAAIKARCHYVNKKWLGGMLTNWSTTETRLHKFRDLRTEQKTGRLNRLPKRDAAMLKRQLSHLQTYLGGIKYMTGLPDIVIIVDQHEEYTALRECITLGIPTICLIDTNCDPDLADISIPANDDAISSIRLILNKLVFAICEGRSSYIRNP.

It belongs to the universal ribosomal protein uS2 family.

It localises to the plastid. The protein localises to the chloroplast. The chain is Small ribosomal subunit protein uS2c (rps2) from Panax ginseng (Korean ginseng).